The following is a 154-amino-acid chain: Transcriptional repressor NrdR (154 aa).

A zinc finger spans residues 3–34 (CPFCNHGELKVIDSRNAPESNAIKRRRECLRC). Residues 48–138 (VQVLKRDGRY…VYRRFKDVGE (91 aa)) enclose the ATP-cone domain.

This sequence belongs to the NrdR family. Requires Zn(2+) as cofactor.

Functionally, negatively regulates transcription of bacterial ribonucleotide reductase nrd genes and operons by binding to NrdR-boxes. This is Transcriptional repressor NrdR from Chlamydia trachomatis serovar L2 (strain ATCC VR-902B / DSM 19102 / 434/Bu).